The sequence spans 95 residues: Co-chaperonin GroES (95 aa).

Belongs to the GroES chaperonin family. Heptamer of 7 subunits arranged in a ring. Interacts with the chaperonin GroEL.

The protein localises to the cytoplasm. In terms of biological role, together with the chaperonin GroEL, plays an essential role in assisting protein folding. The GroEL-GroES system forms a nano-cage that allows encapsulation of the non-native substrate proteins and provides a physical environment optimized to promote and accelerate protein folding. GroES binds to the apical surface of the GroEL ring, thereby capping the opening of the GroEL channel. The polypeptide is Co-chaperonin GroES (Vesicomyosocius okutanii subsp. Calyptogena okutanii (strain HA)).